Here is a 140-residue protein sequence, read N- to C-terminus: MWPFRLRCPIYFKTRLLYSSSQDGFLSSSTNYYNHRTYPGLVNWLFVLTEPELTGELGDDDRKGMHTGGIIRWLGRPSSQLKPIFHAEERRVPPPPERLVGRASPREQATVFKRICAPLHAEVFCRAGLCACHPDCTAAG.

This is an uncharacterized protein from Homo sapiens (Human).